Consider the following 202-residue polypeptide: Superoxide dismutase [Mn], mitochondrial (202 aa).

The N-terminal 5 residues, histidine 1–methionine 5, are a transit peptide targeting the mitochondrion. Residue histidine 31 coordinates Mn(2+). Tyrosine 39 carries the 3'-nitrotyrosine modification. Lysine 49 is subject to N6-acetyllysine; alternate. Lysine 49 bears the N6-succinyllysine; alternate mark. Histidine 79 lines the Mn(2+) pocket. Lysine 95 is modified (N6-acetyllysine). Lysine 103 and lysine 111 each carry N6-acetyllysine; alternate. N6-succinyllysine; alternate is present on residues lysine 103 and lysine 111. Positions 164 and 168 each coordinate Mn(2+). Residue lysine 183 is modified to N6-acetyllysine.

The protein belongs to the iron/manganese superoxide dismutase family. Homotetramer. The cofactor is Mn(2+). In terms of processing, nitrated under oxidative stress. Nitration coupled with oxidation inhibits the catalytic activity. Post-translationally, acetylation at Lys-122 decreases enzymatic activity. Deacetylated by SIRT3 upon exposure to ionizing radiations or after long fasting. Polyubiquitinated; leading to proteasomal degradation. Deubiquitinated by USP36 which increases protein stability.

The protein resides in the mitochondrion matrix. It carries out the reaction 2 superoxide + 2 H(+) = H2O2 + O2. Its function is as follows. Destroys superoxide anion radicals which are normally produced within the cells and which are toxic to biological systems. The polypeptide is Superoxide dismutase [Mn], mitochondrial (SOD2) (Oryctolagus cuniculus (Rabbit)).